Reading from the N-terminus, the 157-residue chain is Cyclic pyranopterin monophosphate synthase (157 aa).

Residues 74–76 (MCH) and 112–113 (ME) each bind substrate. The active site involves Asp127.

The protein belongs to the MoaC family. In terms of assembly, homohexamer; trimer of dimers.

It catalyses the reaction (8S)-3',8-cyclo-7,8-dihydroguanosine 5'-triphosphate = cyclic pyranopterin phosphate + diphosphate. The protein operates within cofactor biosynthesis; molybdopterin biosynthesis. Functionally, catalyzes the conversion of (8S)-3',8-cyclo-7,8-dihydroguanosine 5'-triphosphate to cyclic pyranopterin monophosphate (cPMP). The polypeptide is Cyclic pyranopterin monophosphate synthase (Campylobacter jejuni subsp. doylei (strain ATCC BAA-1458 / RM4099 / 269.97)).